The following is a 444-amino-acid chain: MESVEPPVKDGILYQQHVKFGKKCWRKVWALLYAGGPSGVARLESWDVRDGGLGPAGDRSTGPSRRGERRVIRLADCVSVLPADGESCPRDTGAFLITTTERSHLLAAQHRQSWVDPICQLAFPGTGECSSGSGQAESPKRGFVPMEENSIYSSWQEVTEFPVIVQRTEATSRCQLKGPYLLVLGQDDIQLRETSKPQACFSWPYRFLRKYGSDKGVFSFEAGRRCDSGEGLFAFSSPRAPDICGVVAAAIARQRERLPELAMSPPCPLPRALSLPSLEPPGELREVAPGFELPTPRKLPLTDPGPQSLPLLLSPTQEGPASGLYASVCKQTSKHTGTAEHLYENVCMLEASPGLTNGGPEAQEGPPGGRSPLGSPIYHNTEDLSWPGSAQDSNLEAQYRRLLELELDEAGSAGRSGAQAGIKAKLVTLLTRERKKGPAPCDRP.

A PH domain is found at 7–123 (PVKDGILYQQ…WVDPICQLAF (117 aa)). S138 carries the post-translational modification Phosphoserine. Residues 157 to 261 (EVTEFPVIVQ…ARQRERLPEL (105 aa)) form the IRS-type PTB domain. S274 carries the post-translational modification Phosphoserine. Residues 278–299 (LEPPGELREVAPGFELPTPRKL) form a disordered region. Phosphoserine is present on residues S308 and S314. Y325 is subject to Phosphotyrosine. The interval 354–390 (GLTNGGPEAQEGPPGGRSPLGSPIYHNTEDLSWPGSA) is disordered. Residues 358 to 376 (GGPEAQEGPPGGRSPLGSP) are compositionally biased toward low complexity. S371 is modified (phosphoserine).

This sequence belongs to the DOK family. Type A subfamily. As to quaternary structure, on tyrosine phosphorylation, interacts with CSK and INPP5D/SHIP1 via their SH2 domains. Both Tyr-325 and Tyr-343 are required for interaction with INPP5D. Only Tyr-325 is required for interaction with CSK. Binds ABL1 through the PTB domain and in a kinase-dependent manner. Does not interact with RasGAP. In terms of processing, constitutively tyrosine-phosphorylated. Post-translationally, on IL2 stimulation, phosphorylated on C-terminal tyrosine residues possibly by Src kinases. Can also be phosphorylated by ABL1 kinase. Predominantly expressed in bone marrow, spleen and lung. Low levels in heart, brain, liver, muscle, thymus, kidney and testis. Highly expressed in B-cells and macrophages.

The protein localises to the cytoplasm. It localises to the cell membrane. Its function is as follows. DOK proteins are enzymatically inert adaptor or scaffolding proteins. They provide a docking platform for the assembly of multimolecular signaling complexes. DOK3 is a negative regulator of JNK signaling in B-cells through interaction with INPP5D/SHIP1. May modulate ABL1 function. This is Docking protein 3 (Dok3) from Mus musculus (Mouse).